The primary structure comprises 249 residues: Probable transcriptional regulatory protein Csal_1845 (249 aa).

It belongs to the TACO1 family.

The protein localises to the cytoplasm. This is Probable transcriptional regulatory protein Csal_1845 from Chromohalobacter salexigens (strain ATCC BAA-138 / DSM 3043 / CIP 106854 / NCIMB 13768 / 1H11).